Here is a 455-residue protein sequence, read N- to C-terminus: Argininosuccinate lyase (455 aa).

Belongs to the lyase 1 family. Argininosuccinate lyase subfamily.

Its subcellular location is the cytoplasm. It catalyses the reaction 2-(N(omega)-L-arginino)succinate = fumarate + L-arginine. The protein operates within amino-acid biosynthesis; L-arginine biosynthesis; L-arginine from L-ornithine and carbamoyl phosphate: step 3/3. This Shewanella baltica (strain OS185) protein is Argininosuccinate lyase.